Consider the following 745-residue polypeptide: Inhibitor of nuclear factor kappa-B kinase subunit alpha (745 aa).

The Protein kinase domain maps to 15–302; sequence WEMRERLGTG…LTLKQPRCFV (288 aa). ATP-binding positions include 21-29 and Lys-44; that span reads LGTGGFGNV. Thr-23 is modified (phosphothreonine; by PKB/AKT1 and SGK1). Catalysis depends on Asp-144, which acts as the Proton acceptor. Position 176 is a phosphoserine; by MAP3K14 (Ser-176). Position 179 is a (Microbial infection) O-acetylthreonine; by Yersinia YopJ (Thr-179). Ser-180 is subject to Phosphoserine; by SGK1. The tract at residues 455 to 476 is leucine-zipper; sequence LLRYNANLTKMKNTLISASQQL. An NEMO-binding region spans residues 738–743; sequence LDWSWL.

This sequence belongs to the protein kinase superfamily. Ser/Thr protein kinase family. I-kappa-B kinase subfamily. In terms of assembly, component of the I-kappa-B-kinase (IKK) core complex consisting of CHUK, IKBKB and IKBKG; probably four alpha/CHUK-beta/IKBKB dimers are associated with four gamma/IKBKG subunits. The IKK core complex seems to associate with regulatory or adapter proteins to form a IKK-signalosome holo-complex. The IKK complex associates with TERF2IP/RAP1, leading to promote IKK-mediated phosphorylation of RELA/p65. Part of a complex composed of NCOA2, NCOA3, CHUK/IKKA, IKBKB, IKBKG and CREBBP. Part of a 70-90 kDa complex at least consisting of CHUK/IKKA, IKBKB, NFKBIA, RELA, ELP1 and MAP3K14. Directly interacts with TRPC4AP. May interact with TRAF2. Interacts with NALP2. May interact with MAVS/IPS1. Interacts with ARRB1 and ARRB2. Interacts with NLRC5; prevents CHUK phosphorylation and kinase activity. Interacts with PIAS1; this interaction induces PIAS1 phosphorylation. Interacts with ZNF268 isoform 2; the interaction is further increased in a TNF-alpha-dependent manner. Interacts with FOXO3. Interacts with IFIT5; the interaction synergizes the recruitment of IKK to MAP3K7 and enhances IKK phosphorylation. Interacts with LRRC14. Interacts with SASH1. Directly interacts with DDX3X after the physiological activation of the TLR7 and TLR8 pathways; this interaction enhances CHUK autophosphorylation. As to quaternary structure, (Microbial infection) Interacts with InlC of Listeria monocytogenes. In terms of processing, phosphorylated by MAP3K14/NIK, AKT and to a lesser extent by MEKK1, and dephosphorylated by PP2A. Autophosphorylated. Post-translationally, ubiquitinated by TRIM56 via 'Lys-63'-linked ubiquitination, promoting activation of CHUK/IKKA. (Microbial infection) Acetylation of Thr-179 by Yersinia YopJ prevents phosphorylation and activation, thus blocking the I-kappa-B signaling pathway. Widely expressed.

Its subcellular location is the cytoplasm. The protein localises to the nucleus. The catalysed reaction is L-seryl-[I-kappa-B protein] + ATP = O-phospho-L-seryl-[I-kappa-B protein] + ADP + H(+). Activated when phosphorylated and inactivated when dephosphorylated. Functionally, serine kinase that plays an essential role in the NF-kappa-B signaling pathway which is activated by multiple stimuli such as inflammatory cytokines, bacterial or viral products, DNA damages or other cellular stresses. Acts as a part of the canonical IKK complex in the conventional pathway of NF-kappa-B activation and phosphorylates inhibitors of NF-kappa-B on serine residues. These modifications allow polyubiquitination of the inhibitors and subsequent degradation by the proteasome. In turn, free NF-kappa-B is translocated into the nucleus and activates the transcription of hundreds of genes involved in immune response, growth control, or protection against apoptosis. Negatively regulates the pathway by phosphorylating the scaffold protein TAXBP1 and thus promoting the assembly of the A20/TNFAIP3 ubiquitin-editing complex (composed of A20/TNFAIP3, TAX1BP1, and the E3 ligases ITCH and RNF11). Therefore, CHUK plays a key role in the negative feedback of NF-kappa-B canonical signaling to limit inflammatory gene activation. As part of the non-canonical pathway of NF-kappa-B activation, the MAP3K14-activated CHUK/IKKA homodimer phosphorylates NFKB2/p100 associated with RelB, inducing its proteolytic processing to NFKB2/p52 and the formation of NF-kappa-B RelB-p52 complexes. In turn, these complexes regulate genes encoding molecules involved in B-cell survival and lymphoid organogenesis. Also participates in the negative feedback of the non-canonical NF-kappa-B signaling pathway by phosphorylating and destabilizing MAP3K14/NIK. Within the nucleus, phosphorylates CREBBP and consequently increases both its transcriptional and histone acetyltransferase activities. Modulates chromatin accessibility at NF-kappa-B-responsive promoters by phosphorylating histones H3 at 'Ser-10' that are subsequently acetylated at 'Lys-14' by CREBBP. Additionally, phosphorylates the CREBBP-interacting protein NCOA3. Also phosphorylates FOXO3 and may regulate this pro-apoptotic transcription factor. Phosphorylates RIPK1 at 'Ser-25' which represses its kinase activity and consequently prevents TNF-mediated RIPK1-dependent cell death. Phosphorylates AMBRA1 following mitophagy induction, promoting AMBRA1 interaction with ATG8 family proteins and its mitophagic activity. The sequence is that of Inhibitor of nuclear factor kappa-B kinase subunit alpha (CHUK) from Homo sapiens (Human).